The primary structure comprises 494 residues: Glutamyl-tRNA(Gln) amidotransferase subunit A (494 aa).

Active-site charge relay system residues include Lys80 and Ser155. The Acyl-ester intermediate role is filled by Ser179.

The protein belongs to the amidase family. GatA subfamily. In terms of assembly, heterotrimer of A, B and C subunits.

The catalysed reaction is L-glutamyl-tRNA(Gln) + L-glutamine + ATP + H2O = L-glutaminyl-tRNA(Gln) + L-glutamate + ADP + phosphate + H(+). Functionally, allows the formation of correctly charged Gln-tRNA(Gln) through the transamidation of misacylated Glu-tRNA(Gln) in organisms which lack glutaminyl-tRNA synthetase. The reaction takes place in the presence of glutamine and ATP through an activated gamma-phospho-Glu-tRNA(Gln). The chain is Glutamyl-tRNA(Gln) amidotransferase subunit A from Lachnoclostridium phytofermentans (strain ATCC 700394 / DSM 18823 / ISDg) (Clostridium phytofermentans).